The chain runs to 357 residues: DNA replication and repair protein RecF (357 aa).

30 to 37 (GANGSGKT) provides a ligand contact to ATP.

The protein belongs to the RecF family.

It localises to the cytoplasm. In terms of biological role, the RecF protein is involved in DNA metabolism; it is required for DNA replication and normal SOS inducibility. RecF binds preferentially to single-stranded, linear DNA. It also seems to bind ATP. In Salmonella paratyphi A (strain ATCC 9150 / SARB42), this protein is DNA replication and repair protein RecF.